A 180-amino-acid chain; its full sequence is Large ribosomal subunit protein uL5 (180 aa).

The protein belongs to the universal ribosomal protein uL5 family. As to quaternary structure, part of the 50S ribosomal subunit; part of the 5S rRNA/L5/L18/L25 subcomplex. Contacts the 5S rRNA and the P site tRNA. Forms a bridge to the 30S subunit in the 70S ribosome.

In terms of biological role, this is one of the proteins that bind and probably mediate the attachment of the 5S RNA into the large ribosomal subunit, where it forms part of the central protuberance. In the 70S ribosome it contacts protein S13 of the 30S subunit (bridge B1b), connecting the 2 subunits; this bridge is implicated in subunit movement. Contacts the P site tRNA; the 5S rRNA and some of its associated proteins might help stabilize positioning of ribosome-bound tRNAs. The chain is Large ribosomal subunit protein uL5 from Chlamydia felis (strain Fe/C-56) (Chlamydophila felis).